A 137-amino-acid polypeptide reads, in one-letter code: Small ribosomal subunit protein uS12 (137 aa).

The interval 1 to 26 is disordered; that stretch reads MPTINQLVRKPRQSKIKKSTSPALNK. Basic residues predominate over residues 9–18; the sequence is RKPRQSKIKK.

It belongs to the universal ribosomal protein uS12 family. In terms of assembly, part of the 30S ribosomal subunit. Contacts proteins S8 and S17. May interact with IF1 in the 30S initiation complex.

In terms of biological role, with S4 and S5 plays an important role in translational accuracy. Interacts with and stabilizes bases of the 16S rRNA that are involved in tRNA selection in the A site and with the mRNA backbone. Located at the interface of the 30S and 50S subunits, it traverses the body of the 30S subunit contacting proteins on the other side and probably holding the rRNA structure together. The combined cluster of proteins S8, S12 and S17 appears to hold together the shoulder and platform of the 30S subunit. The protein is Small ribosomal subunit protein uS12 of Listeria innocua serovar 6a (strain ATCC BAA-680 / CLIP 11262).